Reading from the N-terminus, the 637-residue chain is Threonine--tRNA ligase (637 aa).

The TGS domain occupies 1–61; the sequence is MPNVKLPDGN…KEDCSLIIVT (61 aa). The interval 242–533 is catalytic; it reads DHRKLGKALD…LIEHYAGKLP (292 aa). Zn(2+)-binding residues include Cys-333, His-384, and His-510.

It belongs to the class-II aminoacyl-tRNA synthetase family. As to quaternary structure, homodimer. Zn(2+) is required as a cofactor.

The protein localises to the cytoplasm. It carries out the reaction tRNA(Thr) + L-threonine + ATP = L-threonyl-tRNA(Thr) + AMP + diphosphate + H(+). In terms of biological role, catalyzes the attachment of threonine to tRNA(Thr) in a two-step reaction: L-threonine is first activated by ATP to form Thr-AMP and then transferred to the acceptor end of tRNA(Thr). Also edits incorrectly charged L-seryl-tRNA(Thr). This is Threonine--tRNA ligase from Legionella pneumophila (strain Paris).